The primary structure comprises 470 residues: Alpha-galactosidase (470 aa).

An N-terminal signal peptide occupies residues 1–18; the sequence is MFSLLLLTSTALVETALG. Cys42 and Cys74 are oxidised to a cystine. Residue Asn43 is glycosylated (N-linked (GlcNAc...) asparagine). Residues Asp72 and Asp73 each contribute to the substrate site. The N-linked (GlcNAc...) asparagine glycan is linked to Asn82. Cysteines 121 and 151 form a disulfide. Position 147 (Lys147) interacts with substrate. Asp149 serves as the catalytic Nucleophile. Asn175 carries N-linked (GlcNAc...) asparagine glycosylation. Arg205 is a binding site for substrate. The active-site Proton donor is the Asp209. Cystine bridges form between Cys221-Cys237 and Cys223-Cys230. Gln251 contributes to the substrate binding site. N-linked (GlcNAc...) asparagine glycosylation is found at Asn270, Asn388, Asn413, Asn422, Asn435, and Asn454.

This sequence belongs to the glycosyl hydrolase 27 family. Homotetramer.

It is found in the secreted. It catalyses the reaction Hydrolysis of terminal, non-reducing alpha-D-galactose residues in alpha-D-galactosides, including galactose oligosaccharides, galactomannans and galactolipids.. This Zygotorulaspora mrakii (Zygosaccharomyces mrakii) protein is Alpha-galactosidase (MEL).